A 311-amino-acid polypeptide reads, in one-letter code: tRNA-cytidine(32) 2-sulfurtransferase (311 aa).

Positions 47–52 match the PP-loop motif motif; that stretch reads SGGKDS. Cys122, Cys125, and Cys213 together coordinate [4Fe-4S] cluster.

The protein belongs to the TtcA family. In terms of assembly, homodimer. It depends on Mg(2+) as a cofactor. Requires [4Fe-4S] cluster as cofactor.

Its subcellular location is the cytoplasm. The enzyme catalyses cytidine(32) in tRNA + S-sulfanyl-L-cysteinyl-[cysteine desulfurase] + AH2 + ATP = 2-thiocytidine(32) in tRNA + L-cysteinyl-[cysteine desulfurase] + A + AMP + diphosphate + H(+). Its pathway is tRNA modification. Its function is as follows. Catalyzes the ATP-dependent 2-thiolation of cytidine in position 32 of tRNA, to form 2-thiocytidine (s(2)C32). The sulfur atoms are provided by the cysteine/cysteine desulfurase (IscS) system. In Escherichia coli O81 (strain ED1a), this protein is tRNA-cytidine(32) 2-sulfurtransferase.